The chain runs to 496 residues: Protein RepR (496 aa).

A DNA-binding region spans residues Ser-120 to Lys-141.

Essential for replication. This is Protein RepR (repR) from Streptococcus agalactiae.